Reading from the N-terminus, the 416-residue chain is Gamma-glutamyl phosphate reductase (416 aa).

The protein belongs to the gamma-glutamyl phosphate reductase family.

It localises to the cytoplasm. It catalyses the reaction L-glutamate 5-semialdehyde + phosphate + NADP(+) = L-glutamyl 5-phosphate + NADPH + H(+). It participates in amino-acid biosynthesis; L-proline biosynthesis; L-glutamate 5-semialdehyde from L-glutamate: step 2/2. Catalyzes the NADPH-dependent reduction of L-glutamate 5-phosphate into L-glutamate 5-semialdehyde and phosphate. The product spontaneously undergoes cyclization to form 1-pyrroline-5-carboxylate. The protein is Gamma-glutamyl phosphate reductase of Petrotoga mobilis (strain DSM 10674 / SJ95).